The primary structure comprises 213 residues: uncharacterized protein (213 aa).

The helical transmembrane segment at 22–42 (WFGLSMVSIAVIFGPLTGAHV) threads the bilayer. The NPA 1 motif lies at 43 to 45 (NPA). The next 3 membrane-spanning stretches (helical) occupy residues 63–83 (VYIIAQCIGAFIVALIVWLLF), 112–132 (NLLSEIVTTFSLLFILFTLNH), and 138–158 (GVAMFFVFTGVAGGVMSFGGL). The NPA 2 motif lies at 164–166 (NPA). Residues 188–208 (FDYAWVPVLRPVIGAILAAWL) form a helical membrane-spanning segment.

Belongs to the MIP/aquaporin (TC 1.A.8) family.

It is found in the cell membrane. This is an uncharacterized protein from Haemophilus influenzae (strain ATCC 51907 / DSM 11121 / KW20 / Rd).